Here is a 190-residue protein sequence, read N- to C-terminus: Xanthine phosphoribosyltransferase (190 aa).

Leu-20 and Asn-27 together coordinate xanthine. 128 to 132 (ANGEA) serves as a coordination point for 5-phospho-alpha-D-ribose 1-diphosphate. Residue Lys-156 coordinates xanthine.

This sequence belongs to the purine/pyrimidine phosphoribosyltransferase family. Xpt subfamily. Homodimer.

It localises to the cytoplasm. The catalysed reaction is XMP + diphosphate = xanthine + 5-phospho-alpha-D-ribose 1-diphosphate. Its pathway is purine metabolism; XMP biosynthesis via salvage pathway; XMP from xanthine: step 1/1. Converts the preformed base xanthine, a product of nucleic acid breakdown, to xanthosine 5'-monophosphate (XMP), so it can be reused for RNA or DNA synthesis. This chain is Xanthine phosphoribosyltransferase, found in Clostridium botulinum (strain Eklund 17B / Type B).